The following is a 129-amino-acid chain: UPF0102 protein Cag_1992 (129 aa).

The protein belongs to the UPF0102 family.

The sequence is that of UPF0102 protein Cag_1992 from Chlorobium chlorochromatii (strain CaD3).